Reading from the N-terminus, the 545-residue chain is CTP synthase (545 aa).

Residues 1-266 (MATNYIFVTG…DTFVCDRFRL (266 aa)) form an amidoligase domain region. Residue serine 14 participates in CTP binding. Serine 14 serves as a coordination point for UTP. ATP contacts are provided by residues 15–20 (SLGKGI) and aspartate 72. Residues aspartate 72 and glutamate 140 each contribute to the Mg(2+) site. CTP-binding positions include 147 to 149 (DIE), 187 to 192 (KTKPTQ), and lysine 223. Residues 187–192 (KTKPTQ) and lysine 223 contribute to the UTP site. 239 to 241 (KDV) contacts ATP. The Glutamine amidotransferase type-1 domain occupies 291–542 (TIGMVGKYVE…VAAAKAYQDS (252 aa)). Position 352 (glycine 352) interacts with L-glutamine. The active-site Nucleophile; for glutamine hydrolysis is the cysteine 379. Residues 380-383 (LGMQ), glutamate 403, and arginine 470 contribute to the L-glutamine site. Residues histidine 515 and glutamate 517 contribute to the active site.

It belongs to the CTP synthase family. In terms of assembly, homotetramer.

It catalyses the reaction UTP + L-glutamine + ATP + H2O = CTP + L-glutamate + ADP + phosphate + 2 H(+). It carries out the reaction L-glutamine + H2O = L-glutamate + NH4(+). The catalysed reaction is UTP + NH4(+) + ATP = CTP + ADP + phosphate + 2 H(+). It functions in the pathway pyrimidine metabolism; CTP biosynthesis via de novo pathway; CTP from UDP: step 2/2. Allosterically activated by GTP, when glutamine is the substrate; GTP has no effect on the reaction when ammonia is the substrate. The allosteric effector GTP functions by stabilizing the protein conformation that binds the tetrahedral intermediate(s) formed during glutamine hydrolysis. Inhibited by the product CTP, via allosteric rather than competitive inhibition. Catalyzes the ATP-dependent amination of UTP to CTP with either L-glutamine or ammonia as the source of nitrogen. Regulates intracellular CTP levels through interactions with the four ribonucleotide triphosphates. In Actinobacillus pleuropneumoniae serotype 5b (strain L20), this protein is CTP synthase.